The chain runs to 428 residues: Dual-specificity RNA methyltransferase RlmN (428 aa).

The span at 1–17 (MPLHRVEALGEPQDRTG) shows a compositional bias: basic and acidic residues. The segment at 1–44 (MPLHRVEALGEPQDRTGKTFSGRTNGPISSPLTDTERRMSIPQN) is disordered. Over residues 18-33 (KTFSGRTNGPISSPLT) the composition is skewed to polar residues. E136 serves as the catalytic Proton acceptor. Residues 142 to 381 (EDDRGALCVS…APIRMPRGRD (240 aa)) enclose the Radical SAM core domain. Cysteines 149 and 386 form a disulfide. Residues C156, C160, and C163 each contribute to the [4Fe-4S] cluster site. S-adenosyl-L-methionine is bound by residues 212–213 (GE), S244, 266–268 (SLH), and N343. C386 serves as the catalytic S-methylcysteine intermediate.

Belongs to the radical SAM superfamily. RlmN family. The cofactor is [4Fe-4S] cluster.

The protein localises to the cytoplasm. The enzyme catalyses adenosine(2503) in 23S rRNA + 2 reduced [2Fe-2S]-[ferredoxin] + 2 S-adenosyl-L-methionine = 2-methyladenosine(2503) in 23S rRNA + 5'-deoxyadenosine + L-methionine + 2 oxidized [2Fe-2S]-[ferredoxin] + S-adenosyl-L-homocysteine. It carries out the reaction adenosine(37) in tRNA + 2 reduced [2Fe-2S]-[ferredoxin] + 2 S-adenosyl-L-methionine = 2-methyladenosine(37) in tRNA + 5'-deoxyadenosine + L-methionine + 2 oxidized [2Fe-2S]-[ferredoxin] + S-adenosyl-L-homocysteine. In terms of biological role, specifically methylates position 2 of adenine 2503 in 23S rRNA and position 2 of adenine 37 in tRNAs. m2A2503 modification seems to play a crucial role in the proofreading step occurring at the peptidyl transferase center and thus would serve to optimize ribosomal fidelity. The chain is Dual-specificity RNA methyltransferase RlmN from Rhodospirillum rubrum (strain ATCC 11170 / ATH 1.1.1 / DSM 467 / LMG 4362 / NCIMB 8255 / S1).